Reading from the N-terminus, the 417-residue chain is D-galactonate dehydratase family member RspA (417 aa).

Substrate is bound by residues Q43 and H127. The active-site Proton donor/acceptor is Y158. D223 is a Mg(2+) binding site. The active-site Proton donor/acceptor is the H225. E249 and E275 together coordinate Mg(2+). Residues E275, R296, H325, D329, and E352 each contribute to the substrate site.

Belongs to the mandelate racemase/muconate lactonizing enzyme family. GalD subfamily. Mg(2+) is required as a cofactor.

It catalyses the reaction D-gluconate = 2-dehydro-3-deoxy-D-gluconate + H2O. In terms of biological role, has low D-gluconate dehydratase activity (in vitro), suggesting that it has no significant role in D-gluconate degradation in vivo. Has no detectable activity with a panel of 70 other acid sugars (in vitro). This Pantoea ananatis (strain LMG 20103) protein is D-galactonate dehydratase family member RspA (rspA).